The following is a 500-amino-acid chain: Zinc finger protein PLAG1 (500 aa).

Residues 1 to 30 (MATVIPGDLSEVRDTQKVPSGKRKRGETKP) form a disordered region. Residues 2–84 (ATVIPGDLSE…SKYKLQRHMA (83 aa)) form an interaction with KPNA2 region. The Nuclear localization signal signature appears at 22–25 (KRKR). C2H2-type zinc fingers lie at residues 34–56 (FPCQ…SYSH), 62–86 (YKCI…MATH), 92–114 (HKCN…LHTH), 121–143 (FKCE…LALH), 150–172 (LTCK…LKSH), 185–207 (HQCE…MVVH), and 213–236 (FLCQ…KKSH). The decreased nuclear import with localization in the nucleus but also in the cytoplasm stretch occupies residues 41-242 (KAFNSVEKLK…KKSHNQELLK (202 aa)). Residues 243-384 (VKTEPVDFLD…QASSSSKLGL (142 aa)) are repression domain; contains 3 sumoylation motifs and massively decrease transcription activity. Residues 243–500 (VKTEPVDFLD…TLPRFHQAFQ (258 aa)) form an activates transcription; Inhibition of nuclear import due to lack of NLS and KPNA2 interaction region. Residues K244 and K263 each participate in a glycyl lysine isopeptide (Lys-Gly) (interchain with G-Cter in SUMO) cross-link. Positions 365–388 (GGVPSSSQDSQASSSSKLGLDPQI) are disordered. Residues 369–380 (SSSQDSQASSSS) show a composition bias toward low complexity. The massively activates transcription stretch occupies residues 385-500 (DPQIGSLDDG…TLPRFHQAFQ (116 aa)).

This sequence belongs to the krueppel C2H2-type zinc-finger protein family. In terms of assembly, interacts with KPNA2, which escorts protein to the nucleus via interaction with nuclear localization signal. Interacts with E3 SUMO-protein ligase PIAS1, PIAS2 and PIAS4. In terms of processing, sumoylated with SUMO1; which inhibits transcriptional activity, but does not affect nuclear localization. Blockers of sumoylation pathway such as SENP3 and inactive UBE2I increases transcriptional capacity. Sumoylation is increased in the presence of PIAS1. Post-translationally, acetylated by lysine acetyltransferase EP300; which activates transcriptional capacity. Lysine residues that are sumoylated also seem to be target for acetylation. Expressed in fetal tissues such as lung, liver and kidney. Not detected or weak detection in normal adult tissues, but highly expressed in salivary gland with benign or malignant pleiomorphic adenomas with or without 8q12 aberrations, with preferential occurrence in benign tumors.

The protein localises to the nucleus. Transcription factor whose activation results in up-regulation of target genes, such as IGFII, leading to uncontrolled cell proliferation: when overexpressed in cultured cells, higher proliferation rate and transformation are observed. Other target genes such as CRLF1, CRABP2, CRIP2, PIGF are strongly induced in cells with PLAG1 induction. Proto-oncogene whose ectopic expression can trigger the development of pleomorphic adenomas of the salivary gland and lipoblastomas. Overexpression is associated with up-regulation of IGFII, is frequently observed in hepatoblastoma, common primary liver tumor in childhood. Cooperates with CBFB-MYH11, a fusion gene important for myeloid leukemia. The polypeptide is Zinc finger protein PLAG1 (PLAG1) (Homo sapiens (Human)).